The chain runs to 526 residues: MFS-type transporter clz19 (526 aa).

The segment at 1–49 (MNVDTTSPQAPLAGVESKQDGASNEATAKAESTTHDQNESSSFDERPVH) is disordered. Residues 32–49 (STTHDQNESSSFDERPVH) are compositionally biased toward basic and acidic residues. N38 carries an N-linked (GlcNAc...) asparagine glycan. A helical transmembrane segment spans residues 59 to 79 (ALLAVASFAAAISPASTTTYY). N-linked (GlcNAc...) asparagine glycosylation is present at N97. The next 3 membrane-spanning stretches (helical) occupy residues 126-143 (VYLV…GLAL), 186-206 (AYLT…GGLL), and 214-234 (AIFW…LTFF). N-linked (GlcNAc...) asparagine glycans are attached at residues N238 and N253. The next 6 membrane-spanning stretches (helical) occupy residues 294–314 (FIVC…ISIF), 322–342 (YGYS…GSIL), 384–404 (LTVS…YGWL), 411–431 (VASV…VLIA), 446–466 (ALGA…VAAV), and 473–493 (IGIG…LPAL).

It belongs to the major facilitator superfamily.

It localises to the membrane. Its function is as follows. MFS-type transporter; part of the gene cluster that mediates the biosynthesis of squalestatin S1 (SQS1, also known as zaragozic acid A), a heavily oxidized fungal polyketide that offers potent cholesterol lowering activity by targeting squalene synthase (SS). This chain is MFS-type transporter clz19, found in Cochliobolus lunatus (Filamentous fungus).